The primary structure comprises 434 residues: Serine--tRNA ligase (434 aa).

239-241 is a binding site for L-serine; it reads TAE. Residue 270 to 272 coordinates ATP; sequence RSE. Glutamate 293 is an L-serine binding site. An ATP-binding site is contributed by 357-360; that stretch reads EISS. Serine 392 contributes to the L-serine binding site.

Belongs to the class-II aminoacyl-tRNA synthetase family. Type-1 seryl-tRNA synthetase subfamily. In terms of assembly, homodimer. The tRNA molecule binds across the dimer.

It is found in the cytoplasm. It carries out the reaction tRNA(Ser) + L-serine + ATP = L-seryl-tRNA(Ser) + AMP + diphosphate + H(+). The enzyme catalyses tRNA(Sec) + L-serine + ATP = L-seryl-tRNA(Sec) + AMP + diphosphate + H(+). The protein operates within aminoacyl-tRNA biosynthesis; selenocysteinyl-tRNA(Sec) biosynthesis; L-seryl-tRNA(Sec) from L-serine and tRNA(Sec): step 1/1. Catalyzes the attachment of serine to tRNA(Ser). Is also able to aminoacylate tRNA(Sec) with serine, to form the misacylated tRNA L-seryl-tRNA(Sec), which will be further converted into selenocysteinyl-tRNA(Sec). This is Serine--tRNA ligase from Cupriavidus necator (strain ATCC 17699 / DSM 428 / KCTC 22496 / NCIMB 10442 / H16 / Stanier 337) (Ralstonia eutropha).